The following is a 23-amino-acid chain: Glutamine synthetase (23 aa).

This sequence belongs to the glutamine synthetase family. Oligomer of 12 subunits arranged in the form of two hexagons. It depends on Mg(2+) as a cofactor.

The protein resides in the cytoplasm. The enzyme catalyses L-glutamate + NH4(+) + ATP = L-glutamine + ADP + phosphate + H(+). With respect to regulation, the activity of this enzyme could be controlled by adenylation under conditions of abundant glutamine. In terms of biological role, involved in nitrogen metabolism via ammonium assimilation. Catalyzes the ATP-dependent biosynthesis of glutamine from glutamate and ammonia. This Phormidium lapideum protein is Glutamine synthetase.